The following is a 514-amino-acid chain: Peptide chain release factor 3 (514 aa).

Residues 8 to 268 form the tr-type G domain; the sequence is KKRRTFAIIS…TFLKFAPEPH (261 aa). Residues 17–24, 85–89, and 139–142 contribute to the GTP site; these read SHPDAGKT, DTPGH, and NKLD.

Belongs to the TRAFAC class translation factor GTPase superfamily. Classic translation factor GTPase family. PrfC subfamily.

It localises to the cytoplasm. Increases the formation of ribosomal termination complexes and stimulates activities of RF-1 and RF-2. It binds guanine nucleotides and has strong preference for UGA stop codons. It may interact directly with the ribosome. The stimulation of RF-1 and RF-2 is significantly reduced by GTP and GDP, but not by GMP. The polypeptide is Peptide chain release factor 3 (Streptococcus pneumoniae (strain Hungary19A-6)).